The primary structure comprises 394 residues: NAC domain-containing protein 3 (394 aa).

The region spanning 3–147 is the NAC domain; it reads TPVGLRFCPT…TYTLCKVMFN (145 aa). The DNA-binding element occupies 104–153; it reads IGEKKILMFYTSKESKSDWVIHEYHGFSHNQMMMTYTLCKVMFNGGMREK. Disordered stretches follow at residues 152-173 and 264-300; these read EKSS…RRDS and NSLT…CDSF. Low complexity predominate over residues 155-165; it reads SSSPSSSGVSG. Residues 286–300 are compositionally biased toward polar residues; it reads PKTNSIQTSSTCDSF.

The protein resides in the nucleus. The protein is NAC domain-containing protein 3 (NAC003) of Arabidopsis thaliana (Mouse-ear cress).